We begin with the raw amino-acid sequence, 166 residues long: Emerin homolog 1 (166 aa).

The LEM domain occupies 1-44 (MDVSQLTDAELRDSLKSHGVSVGPIVATTRKLYEKKLIKLSDGS). Residues 1-127 (MDVSQLTDAE…QAQSNKGGFL (127 aa)) lie on the Nuclear side of the membrane. Residues 62–99 (IISSSPKKSPPQRVFQNVSAATAAATTSPESDSDDCEE) are disordered. The chain crosses the membrane as a helical span at residues 128 to 148 (GSTITFTILFVFIAVFAYFLI). At 149 to 166 (ENAEQLKLVAETNPEDTI) the chain is on the perinuclear space side.

Interacts with lmn-1 and baf-1. In terms of tissue distribution, ubiquitous. Expressed in all cells, except in cells undergoing spermatogenesis. High expression in hypodermis, neurons, pharyngeal muscle, body wall muscle and gonadal sheath.

The protein localises to the nucleus inner membrane. It localises to the nucleus envelope. Functionally, nuclear lamina-associated inner nuclear membrane protein that is involved in cell division, nuclear structure organization, maintenance of nuclear envelope integrity and nuclear envelope reformation after mitosis. Involved in chromosome segregation and cell division, probably via its interaction with the nuclear intermediate filament protein lmn-1, the main component of nuclear lamina. Required to organize the distribution of lmn-1, nuclear pore complexes (NPCs) and chromatin in mitotically active cells. Together with lem-2, plays a role in baf-1 enrichment at the nuclear envelope in anaphase. Together with lem-2, involved in muscle cell attachment to hypodermal cells, as well as muscle cell location and sarcomere organization. May play a role in radiation-induced DNA damage repair response. May repress binding of transcription factor pha-4 with target sequences in pharyngeal cells. The chain is Emerin homolog 1 (emr-1) from Caenorhabditis elegans.